Reading from the N-terminus, the 433-residue chain is 23S rRNA (uracil(1939)-C(5))-methyltransferase RlmD (433 aa).

The TRAM domain maps to 10-68 (RTTTRQIITVSVNDLDSFGQGVARHNGKTLFIPGLLSQENAEVTVTEDKKQYARAKVVR). [4Fe-4S] cluster contacts are provided by Cys-81, Cys-87, Cys-90, and Cys-162. 6 residues coordinate S-adenosyl-L-methionine: Gln-265, Phe-294, Asn-299, Glu-315, Asn-342, and Asp-363. Cys-389 (nucleophile) is an active-site residue.

This sequence belongs to the class I-like SAM-binding methyltransferase superfamily. RNA M5U methyltransferase family. RlmD subfamily.

The catalysed reaction is uridine(1939) in 23S rRNA + S-adenosyl-L-methionine = 5-methyluridine(1939) in 23S rRNA + S-adenosyl-L-homocysteine + H(+). Its function is as follows. Catalyzes the formation of 5-methyl-uridine at position 1939 (m5U1939) in 23S rRNA. The sequence is that of 23S rRNA (uracil(1939)-C(5))-methyltransferase RlmD from Shigella dysenteriae serotype 1 (strain Sd197).